A 64-amino-acid polypeptide reads, in one-letter code: Large ribosomal subunit protein uL29 (64 aa).

Belongs to the universal ribosomal protein uL29 family.

This Teredinibacter turnerae (strain ATCC 39867 / T7901) protein is Large ribosomal subunit protein uL29.